Reading from the N-terminus, the 122-residue chain is Small ribosomal subunit protein uS13 (122 aa).

Residues 95–122 form a disordered region; sequence GLPVRGQRTKTNARTRKGPKKTIAGKKK.

It belongs to the universal ribosomal protein uS13 family. In terms of assembly, part of the 30S ribosomal subunit. Forms a loose heterodimer with protein S19. Forms two bridges to the 50S subunit in the 70S ribosome.

In terms of biological role, located at the top of the head of the 30S subunit, it contacts several helices of the 16S rRNA. In the 70S ribosome it contacts the 23S rRNA (bridge B1a) and protein L5 of the 50S subunit (bridge B1b), connecting the 2 subunits; these bridges are implicated in subunit movement. Contacts the tRNAs in the A and P-sites. This chain is Small ribosomal subunit protein uS13, found in Corynebacterium diphtheriae (strain ATCC 700971 / NCTC 13129 / Biotype gravis).